A 246-amino-acid chain; its full sequence is Metallo-beta-lactamase IMP-1 (246 aa).

Residues 1 to 18 form the signal peptide; that stretch reads MSKLSVFFIFLFCSIATA. H95, H97, D99, H157, and C176 together coordinate Zn(2+). 2 residues coordinate a beta-lactam: K179 and N185. H215 is a binding site for Zn(2+).

It belongs to the metallo-beta-lactamase superfamily. Class-B beta-lactamase family. Monomer. Zn(2+) serves as cofactor.

The protein resides in the periplasm. It catalyses the reaction a beta-lactam + H2O = a substituted beta-amino acid. With respect to regulation, inhibited by captopril stereoisomers, Hg(2+), Fe(2+), Cu(2+), chelating agents such as EDTA, dansyl derivatives, including dansyl-C4SH, bisthiazolidines, mercaptoacetic acid and by PMPC phosphonates. Inhibited by 3-(3-mercaptopropionylsulfanyl)-propionic acid pentafluorophenyl ester, via a covalent binding to Lys-179. Not susceptible to inactivation by the beta-lactamase-blocking agents clavulanic acid or cloxacillin. Class B beta-lactamase which confers resistance to the beta-lactam antibiotics, including penicillins, cephalosporins and carbapenems. Acts via hydrolysis of the beta-lactam ring. Has penicillin-, cephalosporin- and carbapenem-hydrolyzing activities. Has endoribonuclease activity, cleaving substrate RNAs preferentially between U/C and A, in vitro. The polypeptide is Metallo-beta-lactamase IMP-1 (Serratia marcescens).